The chain runs to 390 residues: Homoserine O-succinyltransferase (390 aa).

The region spanning 59-369 (NAVLVCHALN…PHGHDAFLLD (311 aa)) is the AB hydrolase-1 domain. S165 functions as the Nucleophile in the catalytic mechanism. R235 is a substrate binding site. Active-site residues include D330 and H363. D364 provides a ligand contact to substrate.

It belongs to the AB hydrolase superfamily. MetX family. In terms of assembly, homodimer.

Its subcellular location is the cytoplasm. The catalysed reaction is L-homoserine + succinyl-CoA = O-succinyl-L-homoserine + CoA. It functions in the pathway amino-acid biosynthesis; L-methionine biosynthesis via de novo pathway; O-succinyl-L-homoserine from L-homoserine: step 1/1. Transfers a succinyl group from succinyl-CoA to L-homoserine, forming succinyl-L-homoserine. The chain is Homoserine O-succinyltransferase from Cupriavidus metallidurans (strain ATCC 43123 / DSM 2839 / NBRC 102507 / CH34) (Ralstonia metallidurans).